We begin with the raw amino-acid sequence, 432 residues long: Gamma-glutamyl phosphate reductase (432 aa).

This sequence belongs to the gamma-glutamyl phosphate reductase family.

The protein localises to the cytoplasm. It catalyses the reaction L-glutamate 5-semialdehyde + phosphate + NADP(+) = L-glutamyl 5-phosphate + NADPH + H(+). Its pathway is amino-acid biosynthesis; L-proline biosynthesis; L-glutamate 5-semialdehyde from L-glutamate: step 2/2. In terms of biological role, catalyzes the NADPH-dependent reduction of L-glutamate 5-phosphate into L-glutamate 5-semialdehyde and phosphate. The product spontaneously undergoes cyclization to form 1-pyrroline-5-carboxylate. This is Gamma-glutamyl phosphate reductase from Clavibacter michiganensis subsp. michiganensis (strain NCPPB 382).